We begin with the raw amino-acid sequence, 195 residues long: Thymidylate kinase (195 aa).

An ATP-binding site is contributed by 7-14; sequence GIDGSGKT.

Belongs to the thymidylate kinase family.

The enzyme catalyses dTMP + ATP = dTDP + ADP. Phosphorylation of dTMP to form dTDP in both de novo and salvage pathways of dTTP synthesis. The polypeptide is Thymidylate kinase (tmk) (Aquifex aeolicus (strain VF5)).